A 298-amino-acid chain; its full sequence is MTIELGIAPIGWTNDDMPELGKEVTFEQAIDEMTLAGYKGTEVGNKYPKDPKTLKHFLDLRHLKIASAWFSAFLTTKPYEETEAAFIKHRDFLHAMGAKVIVVAEQGHSVQGLLDKSVFDDKPHFTDDEWERLATGLERLGDRAREVGMQIVYHHHMGTGVQTTAEIDRLMTMTDPDKVSLLFDTGHLVLSGEDPLTIFNRYQDRIKHIHFKDVRQQQADEEHKDHLSFLAGVKNGMFTVPGDGMIDFKPIWEAIQESGYDGWIIVEAEQDPAKANPFEYALKAKKYLDATMNIPQSA.

The protein belongs to the IolE/MocC family. Glutathione serves as cofactor. Requires Co(2+) as cofactor. Mn(2+) is required as a cofactor.

It carries out the reaction scyllo-inosose = 3D-3,5/4-trihydroxycyclohexane-1,2-dione + H2O. Its pathway is polyol metabolism; myo-inositol degradation into acetyl-CoA; acetyl-CoA from myo-inositol: step 2/7. Its function is as follows. Catalyzes the dehydration of inosose (2-keto-myo-inositol, 2KMI or 2,4,6/3,5-pentahydroxycyclohexanone) to 3D-(3,5/4)-trihydroxycyclohexane-1,2-dione (D-2,3-diketo-4-deoxy-epi-inositol). The protein is Inosose dehydratase of Lacticaseibacillus casei (Lactobacillus casei).